The chain runs to 200 residues: RNA polymerase I-specific transcription initiation factor rrn11 (200 aa).

The protein resides in the nucleus. Subunit of a multiprotein complex essential for the initiation of rDNA transcription by RNA polymerase I. Binding to the DNA template is dependent on the initial binding of other factors. The chain is RNA polymerase I-specific transcription initiation factor rrn11 (rrn11) from Schizosaccharomyces pombe (strain 972 / ATCC 24843) (Fission yeast).